A 522-amino-acid polypeptide reads, in one-letter code: Poly(A) polymerase (522 aa).

Residues 63–65 (YGS), 76–78 (DID), aspartate 130, lysine 193, tyrosine 202, and 211–212 (GI) each bind ATP. Mg(2+) contacts are provided by aspartate 76, aspartate 78, and aspartate 130. Residues 475 to 522 (QLKAKEENSIPNEEKKEQLKKEMKQEANTIVKNSSTDDDFMKRFTRKN) are disordered. A compositionally biased stretch (basic and acidic residues) spans 476–499 (LKAKEENSIPNEEKKEQLKKEMKQ).

It belongs to the poly(A) polymerase family. The cofactor is Mg(2+). Requires Mn(2+) as cofactor.

Its subcellular location is the cytoplasm. It localises to the nucleus. It carries out the reaction RNA(n) + ATP = RNA(n)-3'-adenine ribonucleotide + diphosphate. Polymerase that creates the 3'-poly(A) tail of mRNA's. May acquire specificity through interaction with a cleavage and polyadenylation factor. This Entamoeba histolytica (strain ATCC 30459 / HM-1:IMSS / ABRM) protein is Poly(A) polymerase.